The primary structure comprises 181 residues: ATP synthase subunit b 2 (181 aa).

The segment covering M1–G12 has biased composition (low complexity). The tract at residues M1–P20 is disordered. Residues L33–P53 traverse the membrane as a helical segment.

It belongs to the ATPase B chain family. In terms of assembly, F-type ATPases have 2 components, F(1) - the catalytic core - and F(0) - the membrane proton channel. F(1) has five subunits: alpha(3), beta(3), gamma(1), delta(1), epsilon(1). F(0) has three main subunits: a(1), b(2) and c(10-14). The alpha and beta chains form an alternating ring which encloses part of the gamma chain. F(1) is attached to F(0) by a central stalk formed by the gamma and epsilon chains, while a peripheral stalk is formed by the delta and b chains.

The protein localises to the cell inner membrane. F(1)F(0) ATP synthase produces ATP from ADP in the presence of a proton or sodium gradient. F-type ATPases consist of two structural domains, F(1) containing the extramembraneous catalytic core and F(0) containing the membrane proton channel, linked together by a central stalk and a peripheral stalk. During catalysis, ATP synthesis in the catalytic domain of F(1) is coupled via a rotary mechanism of the central stalk subunits to proton translocation. In terms of biological role, component of the F(0) channel, it forms part of the peripheral stalk, linking F(1) to F(0). The b'-subunit is a diverged and duplicated form of b found in plants and photosynthetic bacteria. This is ATP synthase subunit b 2 (atpF2) from Rhodopseudomonas palustris (strain BisA53).